A 93-amino-acid polypeptide reads, in one-letter code: Integration host factor subunit beta (93 aa).

Belongs to the bacterial histone-like protein family. As to quaternary structure, heterodimer of an alpha and a beta chain.

In terms of biological role, this protein is one of the two subunits of integration host factor, a specific DNA-binding protein that functions in genetic recombination as well as in transcriptional and translational control. This Vibrio parahaemolyticus serotype O3:K6 (strain RIMD 2210633) protein is Integration host factor subunit beta.